We begin with the raw amino-acid sequence, 468 residues long: MEGKVLQILGPVVDVEFEGDIPAINEALYVEFEAEGEKKKVVLEVAAQIGDHIVRTIAMDLTDGLTRGEKVVATGAPIKVPVGEAVLGRIFNVTGDVIDGGEEVPADTPRWSIHRDAPPFEEQSTKMEVFETGIKVVDLLCPYMKGGKTGLFGGAGVGKTVIIMELIHNVAYKHSGYSVFAGVGERTREGNDLYHEMKESGVLDKVALCYGQMNEPPGCRNRVAMTGLTMAEYFRDEEGRDVLMFIDNIFRFAQAGAEMSALLGRIPSAVGYQPTLATEMGKLQERITSTKKGSITSIQAVYVPADDLTDPAPASVFAHLDSTTVLNRKIAEKGIYPAVDPLDSTSRILDPQIVGEEHYRVARGVQEVLQKYKDLQDIIAILGMDELSEEDKLTVARARKIEKFLSQPFFVAKVFTGADGRYVELDKTIAGFKEILEGKVDDLPENAFYMVGDLDEAKEKAEKMKAQS.

153–160 (GGAGVGKT) lines the ATP pocket.

The protein belongs to the ATPase alpha/beta chains family. In terms of assembly, F-type ATPases have 2 components, CF(1) - the catalytic core - and CF(0) - the membrane proton channel. CF(1) has five subunits: alpha(3), beta(3), gamma(1), delta(1), epsilon(1). CF(0) has three main subunits: a(1), b(2) and c(9-12). The alpha and beta chains form an alternating ring which encloses part of the gamma chain. CF(1) is attached to CF(0) by a central stalk formed by the gamma and epsilon chains, while a peripheral stalk is formed by the delta and b chains.

It is found in the cell inner membrane. The catalysed reaction is ATP + H2O + 4 H(+)(in) = ADP + phosphate + 5 H(+)(out). Functionally, produces ATP from ADP in the presence of a proton gradient across the membrane. The catalytic sites are hosted primarily by the beta subunits. The protein is ATP synthase subunit beta of Nautilia profundicola (strain ATCC BAA-1463 / DSM 18972 / AmH).